The sequence spans 346 residues: Ephrin-B1 (346 aa).

A signal peptide spans 1–27 (MARPGQRWLGKWLVAMVVWALCRLATP). Over 28 to 237 (LAKNLEPVSW…GDPDGFFNSK (210 aa)) the chain is Extracellular. One can recognise an Ephrin RBD domain in the interval 30–164 (KNLEPVSWSS…TRTMKIIMKV (135 aa)). Cystine bridges form between Cys-64–Cys-101 and Cys-89–Cys-153. Asn-139 carries an N-linked (GlcNAc...) asparagine glycan. The tract at residues 169 to 228 (NAVTPEQLTTSRPSKEADNTVKMATQAPGSRGSLGDSDGKHETVNQEEKSGPGASGGSSG) is disordered. Residues 205-218 (SDGKHETVNQEEKS) are compositionally biased toward basic and acidic residues. A helical transmembrane segment spans residues 238-258 (VALFAAVGAGCVIFLLIIIFL). The Cytoplasmic portion of the chain corresponds to 259–346 (TVLLLKLRKR…QSPANIYYKV (88 aa)). A Nuclear localization signal motif is present at residues 260-273 (VLLLKLRKRHRKHT). Residues 263 to 294 (LKLRKRHRKHTQQRAAALSLSTLASPKGGSGT) are interaction with ZHX2. Ser-281 and Ser-287 each carry phosphoserine. A PDZ-binding motif is present at residues 344–346 (YKV).

The protein belongs to the ephrin family. As to quaternary structure, interacts (via PDZ-binding motif) with GRIP1 and GRIP2 (via PDZ domain 6). Interacts with TLE1. The intracellular domain peptide interacts with ZHX2; the interaction enhances ZHX2 transcriptional repression activity. Inducible phosphorylation of tyrosine residues in the cytoplasmic domain. In terms of processing, proteolytically processed. The ectodomain is cleaved, probably by a metalloprotease, to produce a membrane-tethered C-terminal fragment. This fragment is then further processed by the gamma-secretase complex to yield a soluble intracellular domain peptide which can translocate to the nucleus. The intracellular domain peptide is highly labile suggesting that it is targeted for degradation by the proteasome. Widely expressed. Detected in both neuronal and non-neuronal tissues. Seems to have particularly strong expression in retina, sciatic nerve, heart and spinal cord.

Its subcellular location is the cell membrane. The protein resides in the membrane raft. It localises to the nucleus. In terms of biological role, cell surface transmembrane ligand for Eph receptors, a family of receptor tyrosine kinases which are crucial for migration, repulsion and adhesion during neuronal, vascular and epithelial development. Binding to Eph receptors residing on adjacent cells leads to contact-dependent bidirectional signaling into neighboring cells. Shows high affinity for the receptor tyrosine kinase EPHB1/ELK. Can also bind EPHB2 and EPHB3. Binds to, and induces collapse of, commissural axons/growth cones in vitro. May play a role in constraining the orientation of longitudinally projecting axons. This chain is Ephrin-B1 (EFNB1), found in Homo sapiens (Human).